The chain runs to 455 residues: Probable pectate lyase 6 (455 aa).

The signal sequence occupies residues 1–25 (MVNLGSYVFVFVALSLTVVVPSVQA). 2 N-linked (GlcNAc...) asparagine glycosylation sites follow: asparagine 55 and asparagine 75. Ca(2+) contacts are provided by aspartate 247, aspartate 271, and aspartate 275. The active site involves arginine 327.

This sequence belongs to the polysaccharide lyase 1 family. It depends on Ca(2+) as a cofactor.

It carries out the reaction Eliminative cleavage of (1-&gt;4)-alpha-D-galacturonan to give oligosaccharides with 4-deoxy-alpha-D-galact-4-enuronosyl groups at their non-reducing ends.. Its pathway is glycan metabolism; pectin degradation; 2-dehydro-3-deoxy-D-gluconate from pectin: step 2/5. The sequence is that of Probable pectate lyase 6 from Arabidopsis thaliana (Mouse-ear cress).